The sequence spans 1013 residues: Ephrin type-A receptor 5 (1013 aa).

Residues 1–31 (MGLRGGGGRAGGPAPGWTCLLLCAALRSLLA) form the signal peptide. The Extracellular segment spans residues 32–549 (SPGSEVNLLD…AASSDQSQIP (518 aa)). The Eph LBD domain maps to 36–214 (EVNLLDSRTV…YYKKCPSVIR (179 aa)). N-linked (GlcNAc...) asparagine glycosylation is found at N240, N275, N345, N399, N412, and N437. Fibronectin type-III domains are found at residues 333–443 (PPSA…TNQA) and 444–538 (APSP…TSPV). Residues 550–570 (IIVVSVTVGVILLAVVIGFLL) traverse the membrane as a helical segment. Residues 571 to 1013 (SGSCCDHGCG…VQLVNGMVPL (443 aa)) are Cytoplasmic-facing. Y626 and Y632 each carry phosphotyrosine; by autocatalysis. The 262-residue stretch at 651 to 912 (ITIERVIGAG…EIVSMLDKLI (262 aa)) folds into the Protein kinase domain. Residues 657-665 (IGAGEFGEV) and K683 contribute to the ATP site. Catalysis depends on D776, which acts as the Proton acceptor. Phosphotyrosine; by autocatalysis is present on residues Y809 and Y958. Positions 941 to 1013 (GAYRSVGEWL…VQLVNGMVPL (73 aa)) constitute an SAM domain. Residues 1011-1013 (VPL) carry the PDZ-binding motif.

It belongs to the protein kinase superfamily. Tyr protein kinase family. Ephrin receptor subfamily. In terms of assembly, heterotetramer upon binding of the ligand. The heterotetramer is composed of an ephrin dimer and a receptor dimer. Oligomerization is probably required to induce biological responses. Phosphorylated. Phosphorylation is stimulated by the ligand EFNA5. As to expression, detected in the 10-day embryonic brain, weaker expression in the rest of the 10-day embryo. Undetected in adult tissues.

It localises to the cell membrane. Its subcellular location is the cell projection. It is found in the axon. The protein localises to the dendrite. The enzyme catalyses L-tyrosyl-[protein] + ATP = O-phospho-L-tyrosyl-[protein] + ADP + H(+). Receptor tyrosine kinase which binds promiscuously GPI-anchored ephrin-A family ligands residing on adjacent cells, leading to contact-dependent bidirectional signaling into neighboring cells. The signaling pathway downstream of the receptor is referred to as forward signaling while the signaling pathway downstream of the ephrin ligand is referred to as reverse signaling. Among GPI-anchored ephrin-A ligands, EFNA5 most probably constitutes the cognate/functional ligand for EPHA5. Functions as an axon guidance molecule during development and may be involved in the development of the retinotectal, entorhino-hippocampal and hippocamposeptal pathways. Together with EFNA5 plays also a role in synaptic plasticity in adult brain through regulation of synaptogenesis. This chain is Ephrin type-A receptor 5 (EPHA5), found in Gallus gallus (Chicken).